A 373-amino-acid polypeptide reads, in one-letter code: MAAPASATESQASGGPRPPACLLVLGMAGSGKTTFVQRLTGYLHSQGCPPYVINLDPAVHEVPFPANIDIRDTVKYKEVMKQYGLGPNGGIVTSLNLFATRFDQVMKFIEKAQNMSKYVLIDTPGQIEVFTWSASGTIITEALASSFPTIVIYVMDTSRSTNPVTFMSNMLYACSILYKTKLPFIVVMNKTDIIDHSFAVEWMQDFEAFQDALNQETTYVSNLTRSMSLVLDEFYSSLRVVGVSAVLGTGLDELFVQVASATEEYEREYRPEYERLKKSLASAQSQQQKEQLERLQKDMGSVALDTGTATGSSSPVLDPSDLILTRGTLDEEDEEADSDTDDIDHRVTEESREEPAFQNFMQESMAQYWKKNK.

Ala-2 bears the N-acetylalanine mark. 29–34 (GSGKTT) contributes to the GTP binding site. A Gly-Pro-Asn (GPN)-loop; involved in dimer interface motif is present at residues 86 to 88 (GPN). Position 189–192 (189–192 (NKTD)) interacts with GTP. A phosphoserine mark is found at Ser-301, Ser-312, and Ser-314. The tract at residues 304–373 (LDTGTATGSS…SMAQYWKKNK (70 aa)) is disordered. Position 328 is a phosphothreonine (Thr-328). Over residues 330-342 (DEEDEEADSDTDD) the composition is skewed to acidic residues. Position 338 is a phosphoserine (Ser-338). A Phosphothreonine modification is found at Thr-340. Residues 343 to 355 (IDHRVTEESREEP) show a composition bias toward basic and acidic residues.

This sequence belongs to the GPN-loop GTPase family. As to quaternary structure, heterodimer with GPN3. Binds to RNA polymerase II (RNAPII). Interacts directly with RNAPII subunits RPB4 and RPB7 and the CTD of RPB1. Interacts with XPA.

Its subcellular location is the cytoplasm. It localises to the nucleus. In terms of biological role, small GTPase required for proper nuclear import of RNA polymerase II (RNAPII). May act at an RNAP assembly step prior to nuclear import. Forms an interface between the RNA polymerase II enzyme and chaperone/scaffolding proteins, suggesting that it is required to connect RNA polymerase II to regulators of protein complex formation. May be involved in nuclear localization of XPA. This chain is GPN-loop GTPase 1, found in Bos taurus (Bovine).